The chain runs to 92 residues: UPF0250 protein CGSHiEE_03170 (92 aa).

It belongs to the UPF0250 family.

The protein is UPF0250 protein CGSHiEE_03170 of Haemophilus influenzae (strain PittEE).